The following is a 696-amino-acid chain: Solute carrier family 53 member 1 (696 aa).

The Cytoplasmic portion of the chain corresponds to 1–228 (MKFAEHLSAH…RVPPLGAAQP (228 aa)). The 223-residue stretch at 2-224 (KFAEHLSAHI…MKRLRVPPLG (223 aa)) folds into the SPX domain. The tract at residues 158–165 (KILKKHDK) is important for inositol polyphosphate binding. Residues 229–259 (APAWTTFRVGLFCGIFIVLNITLVLAAVFKL) traverse the membrane as a helical segment. Residues 260–264 (ETDRS) are Extracellular-facing. A helical transmembrane segment spans residues 265-296 (IWPLIRIYRGGFLLIEFLFLLGINTYGWRQAG). The Cytoplasmic segment spans residues 297–309 (VNHVLIFELNPRS). Residues 310–337 (NLSHQHLFEIAGFLGILWCLSLLACFFA) form a helical membrane-spanning segment. Over 338 to 343 (PISVIP) the chain is Extracellular. The chain crosses the membrane as a helical span at residues 344-365 (TYVYPLALYGFMVFFLINPTKT). An intramembrane region (helical) is located at residues 366–383 (FYYKSRFWLLKLLFRVFT). At 384–388 (APFHK) the chain is on the cytoplasmic side. The discontinuously helical transmembrane segment at 389 to 422 (VGFADFWLADQLNSLSVILMDLEYMICFYSLELK) threads the bilayer. Phosphate contacts are provided by Asp-398 and Asn-401. Topologically, residues 423–429 (WDESKGL) are extracellular. The discontinuously helical transmembrane segment at 430–471 (LPNNSEESGICHKYTYGVRAIVQCIPAWLRFIQCLRRYRDTK) threads the bilayer. The region spanning 439 to 643 (ICHKYTYGVR…LNADDQTLLE (205 aa)) is the EXS domain. Position 472 (Arg-472) is a topological domain, cytoplasmic. The helical transmembrane segment at 473-503 (AFPHLVNAGKYSTTFFMVTFAALYSTHKERG) threads the bilayer. Lys-482 and Tyr-483 together coordinate phosphate. Over 504–506 (HSD) the chain is Extracellular. A helical transmembrane segment spans residues 507–534 (TMVFFYLWIVFYIISSCYTLIWDLKMDW). Over 535–553 (GLFDKNAGENTFLREEIVY) the chain is Cytoplasmic. The discontinuously helical transmembrane segment at 554 to 585 (PQKAYYYCAIIEDVILRFAWTIQISITSTTLL) threads the bilayer. Arg-570 provides a ligand contact to phosphate. The Extracellular segment spans residues 586–587 (PH). A helical membrane pass occupies residues 588 to 626 (SGDIIATVFAPLEVFRRFVWNFFRLENEHLNNCGEFRAV). Residues Arg-603 and Arg-604 each coordinate phosphate. Residues 627–696 (RDISVAPLNA…IEDTDDEANT (70 aa)) are Cytoplasmic-facing. The residue at position 668 (Ser-668) is a Phosphoserine. Residues 673–696 (RLASQSKARDTKVLIEDTDDEANT) are disordered. Position 690 is a phosphothreonine (Thr-690).

Belongs to the SYG1 (TC 2.A.94) family. Homodimer. As to expression, widely expressed. Detected in spleen, lymph node, thymus, leukocytes, bone marrow, heart, kidney, pancreas and skeletal muscle.

It localises to the cell membrane. It catalyses the reaction phosphate(in) = phosphate(out). Allosterically activated by inositol hexakisphosphate (Ins6P). Inorganic ion transporter that mediates phosphate ion export across plasma membrane. Plays a major role in phosphate homeostasis, preventing intracellular phosphate accumulation and possible calcium phosphate precipitation, ultimately preserving calcium signaling. Binds inositol hexakisphosphate (Ins6P) and similar inositol polyphosphates, such as 5-diphospho-inositol pentakisphosphate (5-InsP7), which are important intracellular signaling molecules involved in regulation of phosphate flux. This chain is Solute carrier family 53 member 1, found in Homo sapiens (Human).